Reading from the N-terminus, the 274-residue chain is TATA box-binding protein-associated factor RNA polymerase I subunit D (274 aa).

The span at 1–19 (MDSLNYTTACDSAVETENQ) shows a compositional bias: polar residues. Disordered stretches follow at residues 1–45 (MDSL…RQRN) and 84–111 (NKKRKRKKKKYKPTGRSVGRPKGRRTTR). Ser-20 is subject to Phosphoserine. The span at 84–110 (NKKRKRKKKKYKPTGRSVGRPKGRRTT) shows a compositional bias: basic residues. Phosphoserine is present on residues Ser-132 and Ser-229.

Component of the transcription factor SL1/TIF-IB complex, composed of TBP and at least TAF1A, TAF1B, TAF1C and TAF1D. Interacts with UBTF.

The protein resides in the nucleus. Its function is as follows. Component of the transcription factor SL1/TIF-IB complex, which is involved in the assembly of the PIC (preinitiation complex) during RNA polymerase I-dependent transcription. The rate of PIC formation probably is primarily dependent on the rate of association of SL1/TIF-IB with the rDNA promoter. SL1/TIF-IB is involved in stabilization of nucleolar transcription factor 1/UBTF on rDNA. Formation of SL1/TIF-IB excludes the association of TBP with TFIID subunits. The polypeptide is TATA box-binding protein-associated factor RNA polymerase I subunit D (TAF1D) (Bos taurus (Bovine)).